Consider the following 526-residue polypeptide: Probable 1,4-alpha-glucan branching enzyme MT3115 (526 aa).

The active-site Nucleophile is the Glu-205. The substrate site is built by Arg-251 and Gly-268. Asp-344 acts as the Proton donor in catalysis. Positions 396 and 462 each coordinate substrate.

The protein belongs to the glycosyl hydrolase 57 family.

The enzyme catalyses Transfers a segment of a (1-&gt;4)-alpha-D-glucan chain to a primary hydroxy group in a similar glucan chain.. Functionally, catalyzes the formation of branch points in alpha-glucans by cleavage of an alpha-1,4 glycosidic bond and subsequent transfer of the cleaved-off oligosaccharide to a new alpha-1,6 position. Is probably involved in the biosynthesis of 6-O-methylglucosyl lipopolysaccharides (MGLP). This chain is Probable 1,4-alpha-glucan branching enzyme MT3115, found in Mycobacterium tuberculosis (strain CDC 1551 / Oshkosh).